The following is a 299-amino-acid chain: Probable plastid-lipid-associated protein 13, chloroplastic (299 aa).

The transit peptide at 1-48 (MALIHGSVPGTSAVRLVFSTSASPSRFCLNVPVVKQGWKNSCRRRVLR) directs the protein to the chloroplast. Residue Ala-2 is modified to N-acetylvaline.

Belongs to the PAP/fibrillin family.

The protein localises to the plastid. It localises to the chloroplast. The protein resides in the plastoglobule. The chain is Probable plastid-lipid-associated protein 13, chloroplastic (PAP13) from Arabidopsis thaliana (Mouse-ear cress).